Reading from the N-terminus, the 313-residue chain is Glutaminase (313 aa).

Residues Ser64, Asn116, Glu163, Asn170, Tyr194, Tyr246, and Val264 each coordinate substrate.

The protein belongs to the glutaminase family. Homotetramer.

The catalysed reaction is L-glutamine + H2O = L-glutamate + NH4(+). The sequence is that of Glutaminase from Exiguobacterium sp. (strain ATCC BAA-1283 / AT1b).